A 512-amino-acid chain; its full sequence is Maturase K (512 aa).

This sequence belongs to the intron maturase 2 family. MatK subfamily.

It localises to the plastid. The protein localises to the chloroplast. In terms of biological role, usually encoded in the trnK tRNA gene intron. Probably assists in splicing its own and other chloroplast group II introns. In Acer platanoides (Norway maple), this protein is Maturase K.